The chain runs to 271 residues: Large ribosomal subunit protein uL15c (271 aa).

Disordered regions lie at residues 1 to 21 (MASL…NNYP) and 66 to 120 (SNVS…QKSR). A chloroplast-targeting transit peptide spans 1–61 (MASLLSLSST…KESTRLVVVA (61 aa)). Low complexity predominate over residues 66–76 (SNVSPSIGSGS). Residues 91 to 101 (SRKKGKRKGRG) show a composition bias toward basic residues. Over residues 102–114 (HAAGQGGSCGFGM) the composition is skewed to gly residues.

Component of the chloroplast large ribosomal subunit (LSU). Mature 70S chloroplast ribosomes of higher plants consist of a small (30S) and a large (50S) subunit. The 30S small subunit contains 1 molecule of ribosomal RNA (16S rRNA) and 24 different proteins. The 50S large subunit contains 3 rRNA molecules (23S, 5S and 4.5S rRNA) and 33 different proteins.

Its subcellular location is the plastid. It localises to the chloroplast. Functionally, component of the chloroplast ribosome (chloro-ribosome), a dedicated translation machinery responsible for the synthesis of chloroplast genome-encoded proteins, including proteins of the transcription and translation machinery and components of the photosynthetic apparatus. The chain is Large ribosomal subunit protein uL15c (RPL15) from Spinacia oleracea (Spinach).